The primary structure comprises 221 residues: MAITTAESSYEKRIKALFDKQVQMEAREASVIKKVFKFNSNLLDVKEAVVHHHRDVEKLQKVVIQRREEMEKRVSFMEELAQEVEATKQRNLVMREQIKQQKMLVRQRKNEIMESIHTLSKATGTYINREALPARVKGVTVLHGDNRDELIPFDLKATDVEGLDSLCQHLHSLNIDVSQWQQLVSLATEMSMKSHPATPPKDAAKCKSIIEIDLTSPTIQA.

A coiled-coil region spans residues 63–114 (VIQRREEMEKRVSFMEELAQEVEATKQRNLVMREQIKQQKMLVRQRKNEIME).

This sequence belongs to the SPC25 family. Component of the Ndc80 complex, which is composed of Ndc80, Nuf2 and Spc25.

It localises to the nucleus. The protein resides in the chromosome. The protein localises to the centromere. Its subcellular location is the kinetochore. Functionally, acts as a component of the essential kinetochore-associated Ndc80 complex, which is required for chromosome segregation and spindle checkpoint activity during meiosis and mitosis. Required for kinetochore integrity and the organization of stable microtubule binding sites in the outer plate of the kinetochore. Participates in SAC signaling that responds specifically to disruptions in spindle microtubule dynamics. The NDC80 complex synergistically enhances the affinity of the SKA1 complex for microtubules and may allow the NDC80 complex to track depolymerizing microtubules. In Drosophila eugracilis (Fruit fly), this protein is Kinetochore protein Spc25.